The chain runs to 385 residues: 1-deoxy-D-xylulose 5-phosphate reductoisomerase (385 aa).

6 residues coordinate NADPH: Thr-13, Gly-14, Ser-15, Ile-16, Asn-40, and Asn-122. Lys-123 is a binding site for 1-deoxy-D-xylulose 5-phosphate. Glu-124 serves as a coordination point for NADPH. Residue Asp-148 coordinates Mn(2+). 1-deoxy-D-xylulose 5-phosphate-binding residues include Ser-149, Glu-150, Ser-177, and His-200. Glu-150 lines the Mn(2+) pocket. Gly-206 is an NADPH binding site. Positions 213, 218, 219, and 222 each coordinate 1-deoxy-D-xylulose 5-phosphate. Glu-222 lines the Mn(2+) pocket.

It belongs to the DXR family. Mg(2+) is required as a cofactor. The cofactor is Mn(2+).

It carries out the reaction 2-C-methyl-D-erythritol 4-phosphate + NADP(+) = 1-deoxy-D-xylulose 5-phosphate + NADPH + H(+). It participates in isoprenoid biosynthesis; isopentenyl diphosphate biosynthesis via DXP pathway; isopentenyl diphosphate from 1-deoxy-D-xylulose 5-phosphate: step 1/6. Its function is as follows. Catalyzes the NADPH-dependent rearrangement and reduction of 1-deoxy-D-xylulose-5-phosphate (DXP) to 2-C-methyl-D-erythritol 4-phosphate (MEP). In Francisella tularensis subsp. holarctica (strain FTNF002-00 / FTA), this protein is 1-deoxy-D-xylulose 5-phosphate reductoisomerase.